Here is a 222-residue protein sequence, read N- to C-terminus: DNA-directed RNA polymerase V subunit 5A (222 aa).

The protein belongs to the archaeal Rpo5/eukaryotic RPB5 RNA polymerase subunit family. In terms of assembly, component of the RNA polymerase V complex. Expressed in roots, leaves, siliques and seeds, and to a lower level, in flower buds and flowers.

The protein resides in the nucleus. Its function is as follows. DNA-dependent RNA polymerase catalyzes the transcription of DNA into RNA using the four ribonucleoside triphosphates as substrates. Component of RNA polymerase V involved in RNA-directed DNA methylation-dependent (RdDM) silencing of endogenous repeated sequences, including transposable elements. Required for establishment of DNA methylation. The sequence is that of DNA-directed RNA polymerase V subunit 5A (NRPE5A) from Arabidopsis thaliana (Mouse-ear cress).